Here is a 569-residue protein sequence, read N- to C-terminus: Ribosome-inactivating protein SNAI' (569 aa).

A signal peptide spans 1–28 (MKVVATILYLVVLAICGLGIHGAHPTHS). Asn-40 carries N-linked (GlcNAc...) asparagine glycosylation. Glu-201 is an active-site residue. Cystine bridges form between Cys-286–Cys-311, Cys-328–Cys-347, and Cys-369–Cys-381. 2 consecutive Ricin B-type lectin domains span residues 315–435 (EEVT…WIVG) and 437–565 (VEPL…WIAS). A 1-alpha repeat occupies 325-365 (DGFCAEVKNGDEKDGTPVQLSSCGEQSNQQWTFSTDGTIQS). Residues 366–401 (LGKCLTTSSSVMIYNCKVVPPESTKWVVSIDGTITN) form a 1-beta repeat. Residues 404–436 (SGLVLTAPKAAEGTLVSLEKNVHAARQGWIVGN) form a 1-gamma repeat. The stretch at 448 to 488 (EQMCLETNPGNNDVSLGDCSVKSASKVDQKWALYGDGTIRV) is one 2-alpha repeat. 2 cysteine pairs are disulfide-bonded: Cys-451/Cys-466 and Cys-495/Cys-512. One copy of the 2-beta repeat lies at 492–530 (RSLCVTSEGKSSNEPIIILKCLGWANQRWVFNTDGTISN). A 2-gamma repeat occupies 533–566 (SKLVMHVDQNDVPLRKIILSHPSGTSNQQWIAST).

In the N-terminal section; belongs to the ribosome-inactivating protein family. Type 2 RIP subfamily. In terms of assembly, disulfide-linked dimer of A and B chains.

The enzyme catalyses Endohydrolysis of the N-glycosidic bond at one specific adenosine on the 28S rRNA.. The A chain is responsible for inhibiting protein synthesis through the catalytic inactivation of 60S ribosomal subunits by removing adenine from position 4,324 of 28S rRNA. The B chain binds to cell receptors and probably facilitates the entry into the cell of the A chain; B chains are also responsible for cell agglutination (lectin activity). Agglutination is inhibited by Neu5Ac(alpha2,6)lactose, and N-linked glycoproteins such as fetuin and orosomucoid. The chain is Ribosome-inactivating protein SNAI' from Sambucus nigra (European elder).